Consider the following 100-residue polypeptide: uncharacterized protein (100 aa).

A helical membrane pass occupies residues 13 to 32; that stretch reads IWSSLNIICLMVTFLNVQLS.

The protein localises to the mitochondrion membrane. This is an uncharacterized protein from Schizosaccharomyces pombe (strain 972 / ATCC 24843) (Fission yeast).